Here is a 490-residue protein sequence, read N- to C-terminus: Betaine aldehyde dehydrogenase (490 aa).

The K(+) site is built by threonine 26, isoleucine 27, and aspartate 93. NAD(+) is bound at residue 150-152 (GAW). Lysine 162 acts as the Charge relay system in catalysis. 176 to 179 (KPSE) is an NAD(+) binding site. A K(+)-binding site is contributed by valine 180. An NAD(+)-binding site is contributed by 230–233 (GVAS). Leucine 246 is a K(+) binding site. Glutamate 252 serves as the catalytic Proton acceptor. NAD(+)-binding residues include glycine 254, cysteine 286, and glutamate 387. The active-site Nucleophile is the cysteine 286. A Cysteine sulfenic acid (-SOH) modification is found at cysteine 286. Lysine 457 and glycine 460 together coordinate K(+). Glutamate 464 functions as the Charge relay system in the catalytic mechanism.

Belongs to the aldehyde dehydrogenase family. In terms of assembly, dimer of dimers. The cofactor is K(+).

It carries out the reaction betaine aldehyde + NAD(+) + H2O = glycine betaine + NADH + 2 H(+). Its pathway is amine and polyamine biosynthesis; betaine biosynthesis via choline pathway; betaine from betaine aldehyde: step 1/1. Its function is as follows. Involved in the biosynthesis of the osmoprotectant glycine betaine. Catalyzes the irreversible oxidation of betaine aldehyde to the corresponding acid. This is Betaine aldehyde dehydrogenase from Escherichia coli (strain ATCC 8739 / DSM 1576 / NBRC 3972 / NCIMB 8545 / WDCM 00012 / Crooks).